The sequence spans 361 residues: Cyclin-dependent kinase 10 (361 aa).

The region spanning 37–321 is the Protein kinase domain; that stretch reads FEKLNRIGEG…AGDCLESSYF (285 aa). ATP contacts are provided by residues 43–51 and lysine 66; that span reads IGEGTYGIV. The active-site Proton acceptor is the aspartate 161. The residue at position 194 (threonine 194) is a Phosphothreonine. The segment at 332-361 is disordered; the sequence is LMPTFPHHRNKRATPATSLGTESQSRRGRP.

It belongs to the protein kinase superfamily. CMGC Ser/Thr protein kinase family. CDC2/CDKX subfamily. As to quaternary structure, heterodimer with CCNQ, the interaction is required for kinase activity. Interacts with ETS2. Interacts with PRK2.

The protein localises to the cytoplasm. It localises to the cytoskeleton. It is found in the cilium basal body. It carries out the reaction L-seryl-[protein] + ATP = O-phospho-L-seryl-[protein] + ADP + H(+). The catalysed reaction is L-threonyl-[protein] + ATP = O-phospho-L-threonyl-[protein] + ADP + H(+). Its function is as follows. Cyclin-dependent kinase that phosphorylates the transcription factor ETS2 (in vitro) and positively controls its proteasomal degradation (in cells). Involved in the regulation of actin cytoskeleton organization through the phosphorylation of actin dynamics regulators such as PKN2. Is a negative regulator of ciliogenesis through phosphorylation of PKN2 and promotion of RhoA signaling. The protein is Cyclin-dependent kinase 10 (CDK10) of Bos taurus (Bovine).